Reading from the N-terminus, the 2090-residue chain is Ninein (2090 aa).

EF-hand domains are found at residues 8-43 (QHEA…LSLE) and 42-77 (LEEV…ILSR). S152 is modified (phosphoserine). 2 consecutive EF-hand domains span residues 182-217 (WIEE…YGLQ) and 219-252 (VDGE…NGKS). Residue 245 to 252 (GLFKNGKS) coordinates GTP. S269 is modified (phosphoserine). 300-304 (DGMGH) contacts GTP. The EF-hand 5 domain maps to 317–352 (EGIENSQEILKALDFSLDGNINLTELTLALENELLV). The stretch at 357–570 (IHQAALASFK…YRAQGRVLRL (214 aa)) forms a coiled coil. GTP is bound at residue 420–423 (RKLD). The segment at 574 to 595 (NSPSEEVEANSGGIEPEHGLGS) is disordered. Coiled-coil stretches lie at residues 625–1027 (LRLE…QATS), 1068–1099 (LSLQ…QKLE), 1181–1341 (SELE…SVVQ), and 1441–1816 (QDKH…AGGK). The segment at 802 to 1505 (KMETECNRRT…HDLQITCSEM (704 aa)) is important for interaction with CEP170. Residues 1152–1190 (VRDLGSTGTSSVQRQEVKIEESEASVEGFSELENSEETR) form a disordered region. S1550 and S1837 each carry phosphoserine. Coiled-coil stretches lie at residues 1854 to 1885 (QENE…SNLL) and 1922 to 2067 (ANRK…QVSL).

Homooligomer. Interacts with GSK3B/GSK3-beta via its C-terminal domain. Interacts with C14ORF166, such interaction may prevent its phosphorylation by GSK3B. Interacts with AUNIP (via N-terminus). Identified in a complex with AUNIP and AURKA. Interacts with CCDC120. Interacts (via C-terminus) with CEP250. Interacts with CEP170. Interacts with the gamma-tubulin ring complex component TUBGCP3. Interacts with gamma-tubulin. Isoform 6 does not interact with CEP170 or CEP250. In terms of processing, phosphorylated by AURKA/Aurora kinase A and PKA kinases but not CK2 or AURKB/ Aurora kinase B. In terms of tissue distribution, ubiquitous. Highly expressed in heart and skeletal muscle. Isoform 1 is more expressed than isoform 5.

It is found in the cytoplasm. The protein localises to the cytoskeleton. Its subcellular location is the microtubule organizing center. It localises to the centrosome. The protein resides in the centriole. Centrosomal protein required in the positioning and anchorage of the microtubule minus-end in epithelial cells. May also act as a centrosome maturation factor. May play a role in microtubule nucleation, by recruiting the gamma-tubulin ring complex to the centrosome. Overexpression does not perturb nucleation or elongation of microtubules but suppresses release of microtubules. Required for centriole organization and microtubule anchoring at the mother centriole. This is Ninein (NIN) from Homo sapiens (Human).